We begin with the raw amino-acid sequence, 492 residues long: Beta-glucosidase 38 (492 aa).

The N-terminal stretch at Met1–Gly21 is a signal peptide. An a beta-D-glucoside-binding site is contributed by Gln45. 2 N-linked (GlcNAc...) asparagine glycosylation sites follow: Asn73 and Asn77. A beta-D-glucoside-binding positions include His146 and Asn191 to Glu192. Residue Glu192 is the Proton donor of the active site. Cys211 and Cys214 are disulfide-bonded. Residue Asn310 is glycosylated (N-linked (GlcNAc...) asparagine). Position 331 (Tyr331) interacts with a beta-D-glucoside. Asn341 is a glycosylation site (N-linked (GlcNAc...) asparagine). Glu400 serves as a coordination point for a beta-D-glucoside. Glu400 acts as the Nucleophile in catalysis. A glycan (N-linked (GlcNAc...) asparagine) is linked at Asn408. Residues Trp447, Glu454 to Trp455, and Phe463 contribute to the a beta-D-glucoside site.

It belongs to the glycosyl hydrolase 1 family.

It carries out the reaction Hydrolysis of terminal, non-reducing beta-D-glucosyl residues with release of beta-D-glucose.. This Oryza sativa subsp. japonica (Rice) protein is Beta-glucosidase 38 (BGLU38).